Reading from the N-terminus, the 212-residue chain is Nucleoside diphosphate kinase homolog 5 (212 aa).

Residues 13 to 145 (EKTLAIIKPD…EREIRFMFPE (133 aa)) are NDK.

The protein belongs to the NDK family. In terms of assembly, component of the axonemal radial spoke complex 1 (RS1), at least composed of spoke head proteins RSPH1, RSPH3, RSPH9 and the cilia-specific component RSPH4A or sperm-specific component RSPH6A, spoke stalk proteins RSPH14, DNAJB13, DYDC1, ROPN1L and NME5, and the anchor protein IQUB. Interacts with IQUB. Specifically expressed in testis germinal cells.

The protein resides in the cell projection. The protein localises to the cilium. It is found in the cytoplasm. Its subcellular location is the cytoskeleton. It localises to the flagellum axoneme. In terms of biological role, functions as part of axonemal radial spoke complexes that play an important part in the motility of sperm and cilia. Does not seem to have nucleoside diphosphate kinase (NDPK) activity. Confers protection from cell death by BAX and alters the cellular levels of several antioxidant enzymes including GPX5. May play a role in spermiogenesis by increasing the ability of late-stage spermatids to eliminate reactive oxygen species. Exhibits a 3'-5' exonuclease activity with a preference for single-stranded DNA, suggesting roles in DNA proofreading and repair. The chain is Nucleoside diphosphate kinase homolog 5 from Homo sapiens (Human).